The primary structure comprises 408 residues: Arginine biosynthesis bifunctional protein ArgJ (408 aa).

Residues T158, K184, T195, E281, N403, and T408 each coordinate substrate. T195 (nucleophile) is an active-site residue.

This sequence belongs to the ArgJ family. In terms of assembly, heterotetramer of two alpha and two beta chains.

The protein localises to the cytoplasm. It catalyses the reaction N(2)-acetyl-L-ornithine + L-glutamate = N-acetyl-L-glutamate + L-ornithine. The enzyme catalyses L-glutamate + acetyl-CoA = N-acetyl-L-glutamate + CoA + H(+). It functions in the pathway amino-acid biosynthesis; L-arginine biosynthesis; L-ornithine and N-acetyl-L-glutamate from L-glutamate and N(2)-acetyl-L-ornithine (cyclic): step 1/1. The protein operates within amino-acid biosynthesis; L-arginine biosynthesis; N(2)-acetyl-L-ornithine from L-glutamate: step 1/4. In terms of biological role, catalyzes two activities which are involved in the cyclic version of arginine biosynthesis: the synthesis of N-acetylglutamate from glutamate and acetyl-CoA as the acetyl donor, and of ornithine by transacetylation between N(2)-acetylornithine and glutamate. The sequence is that of Arginine biosynthesis bifunctional protein ArgJ from Bacillus thuringiensis subsp. konkukian (strain 97-27).